The chain runs to 329 residues: Peroxidase 17 (329 aa).

A signal peptide spans 1–19 (MSLLPHLILYLTLLTVVVT). Intrachain disulfides connect cysteine 32-cysteine 112, cysteine 65-cysteine 70, cysteine 118-cysteine 315, and cysteine 197-cysteine 229. Histidine 63 serves as the catalytic Proton acceptor. Ca(2+) is bound by residues aspartate 64, valine 67, glycine 69, aspartate 71, and serine 73. Residue proline 160 participates in substrate binding. N-linked (GlcNAc...) asparagine glycans are attached at residues asparagine 165 and asparagine 177. A heme b-binding site is contributed by histidine 190. Serine 191 contributes to the Ca(2+) binding site. 2 N-linked (GlcNAc...) asparagine glycosylation sites follow: asparagine 206 and asparagine 236. Residues aspartate 242, threonine 244, and aspartate 249 each coordinate Ca(2+).

It belongs to the peroxidase family. Classical plant (class III) peroxidase subfamily. It depends on heme b as a cofactor. Ca(2+) is required as a cofactor.

The protein localises to the secreted. It localises to the vacuole. It carries out the reaction 2 a phenolic donor + H2O2 = 2 a phenolic radical donor + 2 H2O. Its function is as follows. Removal of H(2)O(2), oxidation of toxic reductants, biosynthesis and degradation of lignin, suberization, auxin catabolism, response to environmental stresses such as wounding, pathogen attack and oxidative stress. These functions might be dependent on each isozyme/isoform in each plant tissue. This chain is Peroxidase 17 (PER17), found in Arabidopsis thaliana (Mouse-ear cress).